Here is a 198-residue protein sequence, read N- to C-terminus: Peroxiredoxin-2 (198 aa).

An N-acetylalanine modification is found at Ala-2. The 159-residue stretch at 6–164 (AHIGKPAPDF…ALRLVQAFQY (159 aa)) folds into the Thioredoxin domain. Cys-51 (cysteine sulfenic acid (-SOH) intermediate) is an active-site residue. Ser-112 carries the post-translational modification Phosphoserine. Thr-182 is subject to Phosphothreonine. Lys-196 is modified (N6-acetyllysine).

It belongs to the peroxiredoxin family. AhpC/Prx1 subfamily. In terms of assembly, homodimer; disulfide-linked, upon oxidation. 5 homodimers assemble to form a ring-like decamer. Interacts with TIPIN. In terms of processing, the enzyme can be inactivated by further oxidation of the cysteine sulfenic acid (C(P)-SOH) to sulphinic acid (C(P)-SO2H) instead of its condensation to a disulfide bond. It can be reactivated by forming a transient disulfide bond with sulfiredoxin SRXN1, which reduces the cysteine sulfinic acid in an ATP- and Mg-dependent manner. Post-translationally, acetylation increases resistance to transition to high molecular-mass complexes. Deacetylated by HDAC6 which decreases reducing activity.

Its subcellular location is the cytoplasm. The catalysed reaction is a hydroperoxide + [thioredoxin]-dithiol = an alcohol + [thioredoxin]-disulfide + H2O. Thiol-specific peroxidase that catalyzes the reduction of hydrogen peroxide and organic hydroperoxides to water and alcohols, respectively. Plays a role in cell protection against oxidative stress by detoxifying peroxides and as sensor of hydrogen peroxide-mediated signaling events. Might participate in the signaling cascades of growth factors and tumor necrosis factor-alpha by regulating the intracellular concentrations of H(2)O(2). The sequence is that of Peroxiredoxin-2 (PRDX2) from Cricetulus griseus (Chinese hamster).